A 490-amino-acid polypeptide reads, in one-letter code: Selenium-binding protein 1 (490 aa).

An N-acetylalanine modification is found at alanine 2. Residues cysteine 21 and cysteine 22 each contribute to the selenite site.

The protein belongs to the selenium-binding protein family. As to quaternary structure, interacts with GRXS14 and GRXS16. Interacts with DALL3. As to expression, expressed in seedlings, roots, leaves, stems and flowers.

In terms of biological role, binds cadmium and mediates lower sensitivity to stress requiring glutathione (GSH) for tolerance (e.g. cadmium, selenate, and hydrogen peroxide excess). Probably helps to detoxify cadmium potentially through direct binding. Binds selenium, cadmium, zinc and nickel in vitro. This chain is Selenium-binding protein 1, found in Arabidopsis thaliana (Mouse-ear cress).